A 185-amino-acid polypeptide reads, in one-letter code: Thioredoxin F2, chloroplastic (185 aa).

The Thioredoxin domain maps to 59–184 (RRIGSCVVRC…LLAAIEAARS (126 aa)). Catalysis depends on nucleophile residues cysteine 109 and cysteine 112. Cysteine 109 and cysteine 112 are joined by a disulfide. Cysteine 136 carries the post-translational modification S-glutathionyl cysteine; transient.

Belongs to the thioredoxin family. Plant F-type subfamily. Glutathionylation at Cys-136 decreases its ability to be reduced by ferredoxin-thioredoxin reductase and reduces its efficiency in activating target chloroplastic enzymes.

The protein resides in the plastid. It is found in the chloroplast stroma. Functionally, probable thiol-disulfide oxidoreductase involved in the redox regulation of enzymes of both reductive pentose phosphate pathway (Calvin-Benson cycle) and oxidative pentose phosphate pathway. The protein is Thioredoxin F2, chloroplastic of Arabidopsis thaliana (Mouse-ear cress).